Here is a 467-residue protein sequence, read N- to C-terminus: Probable Xaa-Pro aminopeptidase SMAC_04549 (467 aa).

Positions 263, 274, 397, and 437 each coordinate Mn(2+).

It belongs to the peptidase M24B family. Mn(2+) is required as a cofactor.

It catalyses the reaction Release of any N-terminal amino acid, including proline, that is linked to proline, even from a dipeptide or tripeptide.. Functionally, catalyzes the removal of a penultimate prolyl residue from the N-termini of peptides. The sequence is that of Probable Xaa-Pro aminopeptidase SMAC_04549 from Sordaria macrospora (strain ATCC MYA-333 / DSM 997 / K(L3346) / K-hell).